We begin with the raw amino-acid sequence, 1848 residues long: Unconventional myosin-Vb (1848 aa).

Met1 is modified (N-acetylmethionine). Positions 8-60 (SQCTRVWIPDPDEVWRSAELTKDYKEGDKSLQLRLEDETILEYPIDVQRNQLP) constitute a Myosin N-terminal SH3-like domain. A requires for interaction with LIMA1 region spans residues 21 to 40 (VWRSAELTKDYKEGDKSLQL). Residues 69 to 761 (VGENDLTALS…QVAYLEKLRA (693 aa)) form the Myosin motor domain. An ATP-binding site is contributed by 163–170 (GESGAGKT). A disordered region spans residues 596-630 (KDPVPATTPGKGSSSKISVRSARPPMKVSNKEHKK). The interval 640 to 662 (LHLLMETLNATTPHYVRCIKPND) is actin-binding. 6 IQ domains span residues 769–798 (IMIQKTVRGWLQKVKYHRLKGATLTLQRYC), 792–821 (LTLQRYCRGHLARRLAEHLRRIRAAVVLQK), 817–848 (VVLQKHYRMQRARQAYQRVRRAAVVIQAFTRA), 840–869 (VVIQAFTRAMFVRRTYRQVLMEHKATTIQK), 865–896 (TTIQKHVRGWMARRHFQRLRDAAIVIQCAFRM), and 888–917 (IVIQCAFRMLKARRELKALRIEARSAEHLK). 2 coiled-coil regions span residues 899–1266 (ARRE…ILRT) and 1341–1471 (RLLE…GMLE). 2 disordered regions span residues 1093-1123 (QTPGHRRNPSNQSSLESDSNYPSISTSEIGD) and 1166-1192 (QLEKREQQDSKKVQAEPPQTDIDLDPN). Residues 1101-1121 (PSNQSSLESDSNYPSISTSEI) show a composition bias toward polar residues. Over residues 1166 to 1179 (QLEKREQQDSKKVQ) the composition is skewed to basic and acidic residues. The residue at position 1446 (Ser1446) is a Phosphoserine. Positions 1526-1803 (TSTINGIKKV…IRTIQAQLQE (278 aa)) constitute a Dilute domain.

It belongs to the TRAFAC class myosin-kinesin ATPase superfamily. Myosin family. Component of the CART complex, at least composed of ACTN4, HGS/HRS, MYO5B and TRIM3. Interacts with RAB11FIP2, RAB11A, and RAB8A. Found in a complex with CFTR and RAB11A. Interacts with NPC1L1;. Interacts with LIMA1.

The protein resides in the cytoplasm. May be involved in vesicular trafficking via its association with the CART complex. The CART complex is necessary for efficient transferrin receptor recycling but not for EGFR degradation. Required in a complex with RAB11A and RAB11FIP2 for the transport of NPC1L1 to the plasma membrane. Together with RAB11A participates in CFTR trafficking to the plasma membrane and TF (transferrin) recycling in nonpolarized cells. Together with RAB11A and RAB8A participates in epithelial cell polarization. Together with RAB25 regulates transcytosis. Required for proper localization of bile salt export pump ABCB11 at the apical/canalicular plasma membrane of hepatocytes. The protein is Unconventional myosin-Vb (MYO5B) of Homo sapiens (Human).